Here is a 698-residue protein sequence, read N- to C-terminus: Serine/threonine-protein kinase Nek8 (698 aa).

The Protein kinase domain occupies Tyr-4–Cys-258. Residues Val-10 to Val-18 and Lys-33 each bind ATP. Asp-128 (proton acceptor) is an active-site residue. Thr-162 carries the post-translational modification Phosphothreonine; by autocatalysis. Residues Leu-281–Gly-307 form a disordered region. RCC1 repeat units follow at residues Arg-415 to Ala-466, Asp-467 to Ser-518, Gly-520 to Cys-571, Ser-585 to Ala-636, and Gly-638 to Arg-689.

Belongs to the protein kinase superfamily. NEK Ser/Thr protein kinase family. NIMA subfamily. As to quaternary structure, interacts with PKD2; may regulate PKD2 targeting to the cilium. Interacts with ANKS6. Component of a complex containing at least ANKS6, INVS, NEK8 and NPHP3. ANKS6 may organize complex assembly by linking INVS and NPHP3 to NEK8 and INVS may target it to the proximal ciliary axoneme. Interacts with ANKS3. It depends on Mg(2+) as a cofactor.

Its subcellular location is the cytoplasm. It is found in the cytoskeleton. It localises to the cell projection. The protein localises to the cilium. The protein resides in the cilium axoneme. Its subcellular location is the microtubule organizing center. It is found in the centrosome. The enzyme catalyses L-seryl-[protein] + ATP = O-phospho-L-seryl-[protein] + ADP + H(+). It catalyses the reaction L-threonyl-[protein] + ATP = O-phospho-L-threonyl-[protein] + ADP + H(+). Required for renal tubular integrity. May regulate local cytoskeletal structure in kidney tubule epithelial cells. May regulate ciliary biogenesis through targeting of proteins to the cilia. Plays a role in organogenesis and is involved in the regulation of the Hippo signaling pathway. In Rattus norvegicus (Rat), this protein is Serine/threonine-protein kinase Nek8 (Nek8).